We begin with the raw amino-acid sequence, 136 residues long: Purkinje cell protein 2 homolog (136 aa).

Disordered stretches follow at residues 1 to 64 and 86 to 136; these read MMDQ…PEMD and SSLP…TQAP. Residues 23 to 45 form the GoLoco 1 domain; sequence QEGFFNLLSHVQGDRMEGQRCSL. Polar residues predominate over residues 49 to 59; the sequence is PGQTTKSQSDP. In terms of domain architecture, GoLoco 2 spans 63–85; the sequence is MDSLMDMLASTQGRRMDDQRVTV. The segment covering 107-117 has biased composition (polar residues); that stretch reads LSPQPLLTPQD. Phosphoserine is present on Ser-127.

May function as a cell-type specific modulator for G protein-mediated cell signaling. In Homo sapiens (Human), this protein is Purkinje cell protein 2 homolog (PCP2).